The sequence spans 432 residues: Enolase (432 aa).

A (2R)-2-phosphoglycerate-binding site is contributed by glutamine 167. Catalysis depends on glutamate 209, which acts as the Proton donor. Residues aspartate 246, glutamate 290, and aspartate 317 each coordinate Mg(2+). (2R)-2-phosphoglycerate-binding residues include lysine 342, arginine 371, serine 372, and lysine 393. The active-site Proton acceptor is the lysine 342.

The protein belongs to the enolase family. Component of the RNA degradosome, a multiprotein complex involved in RNA processing and mRNA degradation. The cofactor is Mg(2+).

It is found in the cytoplasm. The protein resides in the secreted. It localises to the cell surface. It catalyses the reaction (2R)-2-phosphoglycerate = phosphoenolpyruvate + H2O. It participates in carbohydrate degradation; glycolysis; pyruvate from D-glyceraldehyde 3-phosphate: step 4/5. Its function is as follows. Catalyzes the reversible conversion of 2-phosphoglycerate (2-PG) into phosphoenolpyruvate (PEP). It is essential for the degradation of carbohydrates via glycolysis. The chain is Enolase from Shigella sonnei (strain Ss046).